The chain runs to 446 residues: Glutamate-1-semialdehyde 2,1-aminomutase (446 aa).

Residue lysine 278 is modified to N6-(pyridoxal phosphate)lysine.

The protein belongs to the class-III pyridoxal-phosphate-dependent aminotransferase family. HemL subfamily. In terms of assembly, homodimer. It depends on pyridoxal 5'-phosphate as a cofactor.

It is found in the cytoplasm. The enzyme catalyses (S)-4-amino-5-oxopentanoate = 5-aminolevulinate. It functions in the pathway porphyrin-containing compound metabolism; protoporphyrin-IX biosynthesis; 5-aminolevulinate from L-glutamyl-tRNA(Glu): step 2/2. The protein is Glutamate-1-semialdehyde 2,1-aminomutase of Deinococcus geothermalis (strain DSM 11300 / CIP 105573 / AG-3a).